The chain runs to 382 residues: Gap junction alpha-1 protein (382 aa).

The Cytoplasmic portion of the chain corresponds to glycine 2–lysine 23. Phosphoserine is present on serine 5. A helical membrane pass occupies residues valine 24–alanine 44. Residues tryptophan 45 to arginine 76 lie on the Extracellular side of the membrane. 2 cysteine pairs are disulfide-bonded: cysteine 54–cysteine 192 and cysteine 187–cysteine 198. A helical membrane pass occupies residues phenylalanine 77–phenylalanine 97. Over tyrosine 98–tyrosine 155 the chain is Cytoplasmic. Lysine 144 participates in a covalent cross-link: Glycyl lysine isopeptide (Lys-Gly) (interchain with G-Cter in SUMO). A helical transmembrane segment spans residues isoleucine 156–isoleucine 176. At tyrosine 177 to threonine 207 the chain is on the extracellular side. A helical membrane pass occupies residues isoleucine 208–leucine 228. Residues phenylalanine 229 to isoleucine 382 are Cytoplasmic-facing. Lysine 237 is covalently cross-linked (Glycyl lysine isopeptide (Lys-Gly) (interchain with G-Cter in SUMO)). The interaction with NOV stretch occupies residues serine 244 to isoleucine 382. Phosphotyrosine is present on tyrosine 247. A phosphoserine mark is found at serine 255, serine 257, and serine 262. An interaction with UBQLN4 region spans residues lysine 264 to isoleucine 382. Cysteine 271 carries the S-nitrosocysteine modification. Residue threonine 275 is modified to Phosphothreonine. Phosphoserine is present on residues serine 306 and serine 314. Positions glutamine 317–alanine 332 are enriched in polar residues. A disordered region spans residues glutamine 317–isoleucine 382. A Phosphoserine; by CK1 modification is found at serine 325. A Phosphothreonine modification is found at threonine 326. A phosphoserine; by CK1 mark is found at serine 328 and serine 330. Phosphoserine occurs at positions 344 and 365. Over residues arginine 362–arginine 374 the composition is skewed to low complexity. The residue at position 368 (serine 368) is a Phosphoserine; by PKC/PRKCG and PKC/PRKCD. Phosphoserine occurs at positions 369 and 373.

This sequence belongs to the connexin family. Alpha-type (group II) subfamily. As to quaternary structure, a connexon is composed of a hexamer of connexins. Interacts with SGSM3. Interacts with RIC1/CIP150. Interacts with CNST and CSNK1D. Interacts (via C-terminus) with TJP1. Interacts (via C-terminus) with SRC (via SH3 domain). Interacts (not ubiquitinated) with UBQLN4 (via UBA domain). Interacts with NOV. Interacts with TMEM65. Interacts with ANK3/ANKG and PKP2. Post-translationally, phosphorylation at Ser-325, Ser-328 and Ser-330 by CK1 modulates gap junction assembly. Phosphorylated at Ser-368 by PRKCG; phosphorylation induces disassembly of gap junction plaques and inhibition of gap junction activity. Phosphorylation at Ser-368 by PRKCD triggers its internalization into small vesicles leading to proteasome-mediated degradation. In terms of processing, sumoylated with SUMO1, SUMO2 and SUMO3, which may regulate the level of functional Cx43 gap junctions at the plasma membrane. May be desumoylated by SENP1 or SENP2. S-nitrosylation at Cys-271 is enriched at the muscle endothelial gap junction in arteries, it augments channel permeability and may regulate of smooth muscle cell to endothelial cell communication. Post-translationally, acetylated in the developing cortex; leading to delocalization from the cell membrane.

The protein localises to the cell membrane. Its subcellular location is the cell junction. It is found in the gap junction. The protein resides in the endoplasmic reticulum. In terms of biological role, gap junction protein that acts as a regulator of bladder capacity. A gap junction consists of a cluster of closely packed pairs of transmembrane channels, the connexons, through which materials of low MW diffuse from one cell to a neighboring cell. May play a critical role in the physiology of hearing by participating in the recycling of potassium to the cochlear endolymph. Negative regulator of bladder functional capacity: acts by enhancing intercellular electrical and chemical transmission, thus sensitizing bladder muscles to cholinergic neural stimuli and causing them to contract. May play a role in cell growth inhibition through the regulation of NOV expression and localization. Plays an essential role in gap junction communication in the ventricles. This is Gap junction alpha-1 protein (GJA1) from Ursus americanus (American black bear).